Reading from the N-terminus, the 109-residue chain is Hainantoxin-XVIII (109 aa).

A signal peptide spans 1–18 (MKLSIIIIATSLVIAVVA). Residues 19-46 (FPSKDSKAIENDKTEQRMEIVVQETARA) constitute a propeptide that is removed on maturation. 4 disulfides stabilise this stretch: cysteine 47/cysteine 62, cysteine 55/cysteine 68, cysteine 59/cysteine 108, and cysteine 61/cysteine 81.

Belongs to the neurotoxin 25 family. F7 subfamily. As to expression, expressed by the venom gland.

The protein resides in the secreted. In terms of biological role, putative ion channel inhibitor. In Cyriopagopus hainanus (Chinese bird spider), this protein is Hainantoxin-XVIII.